Consider the following 285-residue polypeptide: Phasyl DNA replicon protein arp (285 aa).

Functionally, essential for autonomous replication of the phasyl DNA replicon. In Escherichia coli, this protein is Phasyl DNA replicon protein arp (arp).